The following is a 597-amino-acid chain: Hydrogenase-1 large chain (597 aa).

Ni(2+) contacts are provided by cysteine 76, cysteine 79, cysteine 576, and cysteine 579.

It belongs to the [NiFe]/[NiFeSe] hydrogenase large subunit family. In terms of assembly, heterodimer of a large and a small subunit. Ni(2+) serves as cofactor.

The protein resides in the cell membrane. It carries out the reaction H2 + A = AH2. This is Hydrogenase-1 large chain (hyaB) from Citrobacter freundii.